The primary structure comprises 373 residues: 3 beta-hydroxysteroid dehydrogenase/Delta 5--&gt;4-isomerase type 6 (373 aa).

Catalysis depends on tyrosine 155, which acts as the Proton acceptor. Position 159 (lysine 159) interacts with NAD(+). Residues 288 to 308 form a helical membrane-spanning segment; the sequence is VPLLYWLAFMLETVSFLLSPI.

It belongs to the 3-beta-HSD family. In terms of tissue distribution, expressed in skin and testis.

It is found in the endoplasmic reticulum membrane. It localises to the mitochondrion membrane. The catalysed reaction is a 3beta-hydroxy-Delta(5)-steroid + NAD(+) = a 3-oxo-Delta(5)-steroid + NADH + H(+). It carries out the reaction a 3-oxo-Delta(5)-steroid = a 3-oxo-Delta(4)-steroid. The protein operates within lipid metabolism; steroid biosynthesis. Functionally, 3-beta-HSD is a bifunctional enzyme, that catalyzes the oxidative conversion of Delta(5)-ene-3-beta-hydroxy steroid, and the oxidative conversion of ketosteroids. The 3-beta-HSD enzymatic system plays a crucial role in the biosynthesis of all classes of hormonal steroids. May be involved in local production of progesterone. In Mus musculus (Mouse), this protein is 3 beta-hydroxysteroid dehydrogenase/Delta 5--&gt;4-isomerase type 6 (Hsd3b6).